We begin with the raw amino-acid sequence, 582 residues long: Solute carrier family 15 member 3 (582 aa).

The segment at 1 to 20 is disordered; the sequence is MSALRAEQQPSRSGERQPLV. 4 helical membrane-spanning segments follow: residues 33–53, 77–97, 102–122, and 155–175; these read TAAA…FGVT, LLFL…ADVY, LAIS…LTTI, and PYCA…ASSV. N-linked (GlcNAc...) asparagine glycosylation occurs at N178. A helical transmembrane segment spans residues 201–221; that stretch reads WFYWSINLGAILSLLVVAFIE. N-linked (GlcNAc...) asparagine glycosylation is present at N223. Transmembrane regions (helical) follow at residues 232–252 and 312–332; these read IIVG…PVFI and FQVL…WMVY. N357 carries an N-linked (GlcNAc...) asparagine glycan. 2 helical membrane-spanning segments follow: residues 371–391 and 409–429; these read IPEA…VPVK and LQKM…AGVL. N-linked (GlcNAc...) asparagine glycosylation occurs at N440. Helical transmembrane passes span 466–485, 498–518, and 541–561; these read YLLI…EFAY, GIFF…VALL, and LYFF…LWIA. A glycan (N-linked (GlcNAc...) asparagine) is linked at N575.

The protein belongs to the major facilitator superfamily. Proton-dependent oligopeptide transporter (POT/PTR) (TC 2.A.17) family. As to expression, abundant expression in lung, spleen and thymus, and detected faintly in brain, liver, adrenal gland and heart at protein level.

It is found in the lysosome membrane. The protein localises to the endosome membrane. The catalysed reaction is N-acetyl-D-muramoyl-L-alanyl-D-isoglutamine(out) + n H(+)(out) = N-acetyl-D-muramoyl-L-alanyl-D-isoglutamine(in) + n H(+)(in). It catalyses the reaction glycylglycylglycine(out) + n H(+)(out) = glycylglycylglycine(in) + n H(+)(in). The enzyme catalyses carnosine(out) + n H(+)(out) = carnosine(in) + n H(+)(in). It carries out the reaction L-histidine(out) + n H(+)(out) = L-histidine(in) + n H(+)(in). In terms of biological role, proton-coupled amino-acid transporter that transports free histidine and certain di- and tripeptides, and is involved in innate immune response. Also able to transport carnosine. Involved in the detection of microbial pathogens by toll-like receptors (TLRs) and NOD-like receptors (NLRs), probably by mediating transport of bacterial peptidoglycans across the endolysosomal membrane: catalyzes the transport of certain bacterial peptidoglycans, such as muramyl dipeptide (MDP), the NOD2 ligand. This is Solute carrier family 15 member 3 (Slc15a3) from Rattus norvegicus (Rat).